The chain runs to 140 residues: Oleosin Cor a 13 (140 aa).

2 helical membrane-spanning segments follow: residues 31–51 (GSLL…LTLA) and 75–95 (GFLA…WIYR).

Belongs to the oleosin family. Expressed in seeds.

Its subcellular location is the lipid droplet. The protein localises to the membrane. Functionally, may have a structural role to stabilize the lipid body during desiccation of the seed by preventing coalescence of the oil. Probably interacts with both lipid and phospholipid moieties of lipid bodies. May also provide recognition signals for specific lipase anchorage in lipolysis during seedling growth. The sequence is that of Oleosin Cor a 13 from Corylus avellana (European hazel).